The following is a 280-amino-acid chain: Antiactivator FleN (280 aa).

ATP contacts are provided by residues lysine 19 to asparagine 26, glutamate 153, asparagine 181, proline 215 to aspartate 217, and arginine 221.

It belongs to the ParA family. In terms of assembly, forms homodimers. Interacts with FleQ.

ATP-binding allows dimerization and subsequent antagonistic effect against FleQ. ATPase that plays an important role in maintaining flagellar number in Pseudomonas aeruginosa. Exhibits anti-activator activity against FleQ, the global transcriptional regulator of flagellar genes. This Pseudomonas aeruginosa (strain ATCC 15692 / DSM 22644 / CIP 104116 / JCM 14847 / LMG 12228 / 1C / PRS 101 / PAO1) protein is Antiactivator FleN.